Consider the following 164-residue polypeptide: DNA-binding protein inhibitor ID-1 (164 aa).

Positions leucine 46–leucine 98 constitute a bHLH domain. A Nuclear export signal motif is present at residues valine 91 to serine 104.

As to quaternary structure, heterodimer with other HLH proteins. Interacts with COPS5, IFI204, GATA4, NKX2-5, CLOCK and BMAL1. Isoform Short can form homodimers. Phosphorylated in vitro by PKA and PKC.

It localises to the cytoplasm. It is found in the nucleus. In terms of biological role, transcriptional regulator (lacking a basic DNA binding domain) which negatively regulates the basic helix-loop-helix (bHLH) transcription factors by forming heterodimers and inhibiting their DNA binding and transcriptional activity. Implicated in regulating a variety of cellular processes, including cellular growth, senescence, differentiation, apoptosis, angiogenesis, and neoplastic transformation. Inhibits skeletal muscle and cardiac myocyte differentiation. Regulates the circadian clock by repressing the transcriptional activator activity of the CLOCK-BMAL1 heterodimer. In Rattus norvegicus (Rat), this protein is DNA-binding protein inhibitor ID-1 (Id1).